The chain runs to 747 residues: E3 UFM1-protein ligase 1 homolog (747 aa).

Positions 403–468 (EKKKQCGSKA…GTVQVNSEEL (66 aa)) are disordered. Basic residues predominate over residues 429–438 (GGKGGKKGGK). Over residues 439–449 (GGKNGGGGGKG) the composition is skewed to gly residues. The segment covering 450 to 465 (ATSSVPTGSGTVQVNS) has biased composition (polar residues).

This sequence belongs to the UFL1 family.

In terms of biological role, E3 UFM1-protein ligase that mediates ufmylation of target proteins. This is E3 UFM1-protein ligase 1 homolog (ufl-1) from Caenorhabditis briggsae.